The sequence spans 413 residues: 1-deoxy-D-xylulose 5-phosphate reductoisomerase (413 aa).

Threonine 28, glycine 29, serine 30, isoleucine 31, glycine 54, arginine 55, asparagine 56, and asparagine 142 together coordinate NADPH. Residue lysine 143 participates in 1-deoxy-D-xylulose 5-phosphate binding. Residue glutamate 144 participates in NADPH binding. Aspartate 168 provides a ligand contact to Mn(2+). 1-deoxy-D-xylulose 5-phosphate-binding residues include serine 169, glutamate 170, serine 194, and histidine 217. Glutamate 170 contributes to the Mn(2+) binding site. Glycine 223 contacts NADPH. 1-deoxy-D-xylulose 5-phosphate contacts are provided by serine 230, asparagine 235, lysine 236, and glutamate 239. Mn(2+) is bound at residue glutamate 239.

The protein belongs to the DXR family. Requires Mg(2+) as cofactor. Mn(2+) serves as cofactor.

The catalysed reaction is 2-C-methyl-D-erythritol 4-phosphate + NADP(+) = 1-deoxy-D-xylulose 5-phosphate + NADPH + H(+). Its pathway is isoprenoid biosynthesis; isopentenyl diphosphate biosynthesis via DXP pathway; isopentenyl diphosphate from 1-deoxy-D-xylulose 5-phosphate: step 1/6. Its function is as follows. Catalyzes the NADPH-dependent rearrangement and reduction of 1-deoxy-D-xylulose-5-phosphate (DXP) to 2-C-methyl-D-erythritol 4-phosphate (MEP). The chain is 1-deoxy-D-xylulose 5-phosphate reductoisomerase from Thermosynechococcus vestitus (strain NIES-2133 / IAM M-273 / BP-1).